Consider the following 1889-residue polypeptide: Vacuolar membrane-associated protein IML1 (1889 aa).

Disordered regions lie at residues 1–74 (MPPP…SRLR), 515–540 (QPGQVQRKSKVDISQGSTPKQTTLTF), 551–570 (SPNKRIEGSRNGEPAGPLSS), 716–808 (ARLP…LKAP), 838–900 (AGAS…DSPT), and 1252–1272 (PPNERRLQGSGSTRSKKDTNP). The segment covering 47–60 (YSNSPGDTVSSNST) has biased composition (polar residues). Basic and acidic residues predominate over residues 729-742 (RCRDHEETPRRQAL). 3 stretches are compositionally biased toward polar residues: residues 747–766 (PLGTSYTDRRPSTASQQTLP), 787–804 (KSMSAQSNKSEPKASSSP), and 840–853 (ASKTLTPSRSSQDL). The span at 865-877 (SSSRRLTGGTSTS) shows a compositional bias: low complexity. A DEP domain is found at 1331–1417 (ENGGVRMQNR…DGQYFYQISN (87 aa)). 2 disordered regions span residues 1424-1484 (PPGW…GNKP) and 1724-1824 (PTPL…WSTW). Low complexity-rich tracts occupy residues 1737–1789 (SPAL…PGLT) and 1801–1811 (PSTSATTTTAC).

The protein belongs to the IML1 family.

It localises to the vacuole membrane. The protein is Vacuolar membrane-associated protein IML1 (IML1) of Chaetomium globosum (strain ATCC 6205 / CBS 148.51 / DSM 1962 / NBRC 6347 / NRRL 1970) (Soil fungus).